A 153-amino-acid polypeptide reads, in one-letter code: Histone H2B.6 (153 aa).

Composition is skewed to basic and acidic residues over residues Met1–Pro28 and Glu36–Lys53. Residues Met1–Lys60 are disordered. N6-acetyllysine occurs at positions 7 and 37. A Glycyl lysine isopeptide (Lys-Gly) (interchain with G-Cter in ubiquitin) cross-link involves residue Lys149.

It belongs to the histone H2B family. As to quaternary structure, the nucleosome is a histone octamer containing two molecules each of H2A, H2B, H3 and H4 assembled in one H3-H4 heterotetramer and two H2A-H2B heterodimers. The octamer wraps approximately 147 bp of DNA. Can be acetylated to form H2BK6ac and H2BK33ac. In terms of processing, monoubiquitinated by BRE1 to form H2BK143ub1 and deubiquitinated by UBP26. Required for heterochromatic histone H3 di- and trimethylation at H3K4me. May give a specific tag for epigenetic transcriptional activation.

The protein localises to the nucleus. Its subcellular location is the chromosome. In terms of biological role, core component of nucleosome. Nucleosomes wrap and compact DNA into chromatin, limiting DNA accessibility to the cellular machineries which require DNA as a template. Histones thereby play a central role in transcription regulation, DNA repair, DNA replication and chromosomal stability. DNA accessibility is regulated via a complex set of post-translational modifications of histones, also called histone code, and nucleosome remodeling. This chain is Histone H2B.6 (H2B.6), found in Oryza sativa subsp. japonica (Rice).